Consider the following 359-residue polypeptide: Halocin-H4 (359 aa).

An N-terminal signal peptide occupies residues 1 to 46 (MSKDRDGRRTSRRGTLKKIGGFSLGALSFGAVGRTQAATGSSVTTA). 2 disordered regions span residues 40–59 (GSSV…DPKS) and 340–359 (IPDR…SRKQ).

It localises to the secreted. Has antibacterial activity against other haloarchaeons. Interacts with the membrane of the target cells where it causes permeability changes that result in an ionic imbalance leading to cell lysis and death. The chain is Halocin-H4 (halH4) from Haloferax mediterranei (strain ATCC 33500 / DSM 1411 / JCM 8866 / NBRC 14739 / NCIMB 2177 / R-4) (Halobacterium mediterranei).